A 515-amino-acid chain; its full sequence is Tripartite motif-containing protein 5 (515 aa).

An N-acetylalanine modification is found at A2. The RING-type zinc finger occupies 15–60 (CPICLELLTEPLSLPCGHSFCQACITANHKESMLYKEEERSCPVCR). The residue at position 87 (S87) is a Phosphoserine. The B box-type zinc-finger motif lies at 92–133 (QKVDHCARHGEKLLLFCQEDSKVICWLCERSQEHRGHHTFLM). Zn(2+) contacts are provided by C97, H100, C119, and H125. Positions 137-225 (AQEYHVKLQT…LTKSETEMVQ (89 aa)) form a coiled coil. Residues 187 to 200 (FEQLREILDWEESN) are required for interaction with GABARAP and for autophagy. One can recognise a B30.2/SPRY domain in the interval 283 to 515 (LKGMLDMFRE…VPMTLCSPSS (233 aa)).

This sequence belongs to the TRIM/RBCC family. As to quaternary structure, can form homodimers and homotrimers. In addition to lower-order dimerization, also exhibits a higher-order multimerization and both low- and high-order multimerizations are essential for its restriction activity. Interacts with BTBD1 and BTBD2. Interacts with PSMC4, PSMC5, PSMD7 and HSPA8/HSC70. Interacts (via B30.2/SPRY domain) with HSPA1A/B. Interacts with PSMC2, MAP3K7/TAK1, TAB2 and TAB3. Interacts with SQSTM1. Interacts with TRIM6 and TRIM34. Interacts with ULK1 (phosphorylated form), GABARAP, GABARAPL1, GABARAPL2, MAP1LC3A, MAP1LC3C and BECN1. Degraded in a proteasome-independent fashion in the absence of viral infection but in a proteasome-dependent fashion following exposure to restriction sensitive virus. In terms of processing, autoubiquitinated in a RING finger- and UBE2D2-dependent manner. Monoubiquitinated by TRIM21. Deubiquitinated by Yersinia YopJ. Ubiquitination may not lead to proteasomal degradation.

It localises to the cytoplasm. Its subcellular location is the nucleus. It carries out the reaction S-ubiquitinyl-[E2 ubiquitin-conjugating enzyme]-L-cysteine + [acceptor protein]-L-lysine = [E2 ubiquitin-conjugating enzyme]-L-cysteine + N(6)-ubiquitinyl-[acceptor protein]-L-lysine.. The protein operates within protein modification; protein ubiquitination. Functionally, capsid-specific restriction factor that prevents infection from non-host-adapted retroviruses. Blocks viral replication early in the life cycle, after viral entry but before reverse transcription. In addition to acting as a capsid-specific restriction factor, also acts as a pattern recognition receptor that activates innate immune signaling in response to the retroviral capsid lattice. Binding to the viral capsid triggers its E3 ubiquitin ligase activity, and in concert with the heterodimeric ubiquitin conjugating enzyme complex UBE2V1-UBE2N (also known as UBC13-UEV1A complex) generates 'Lys-63'-linked polyubiquitin chains, which in turn are catalysts in the autophosphorylation of the MAP3K7/TAK1 complex (includes TAK1, TAB2, and TAB3). Activation of the MAP3K7/TAK1 complex by autophosphorylation results in the induction and expression of NF-kappa-B and MAPK-responsive inflammatory genes, thereby leading to an innate immune response in the infected cell. Plays a role in regulating autophagy through activation of autophagy regulator BECN1 by causing its dissociation from its inhibitors BCL2 and TAB2. In Chlorocebus aethiops (Green monkey), this protein is Tripartite motif-containing protein 5 (TRIM5).